We begin with the raw amino-acid sequence, 238 residues long: uncharacterized protein (238 aa).

The disordered stretch occupies residues 1–20 (MPNLHSLPLGTRPENAIRNN).

Belongs to the PEP2 family.

This is an uncharacterized protein from Emericella nidulans (strain FGSC A4 / ATCC 38163 / CBS 112.46 / NRRL 194 / M139) (Aspergillus nidulans).